A 361-amino-acid polypeptide reads, in one-letter code: 24-methylenesterol C-methyltransferase 2 (361 aa).

It belongs to the class I-like SAM-binding methyltransferase superfamily. Erg6/SMT family.

The enzyme catalyses 24-methylidenelophenol + S-adenosyl-L-methionine = (Z)-24-ethylidenelophenol + S-adenosyl-L-homocysteine + H(+). It participates in steroid biosynthesis; sterol biosynthesis. Catalyzes the methyl transfer from S-adenosyl-methionine to the methylene group of 24-methylene lophenol to form 24-ethylidene lophenol. This chain is 24-methylenesterol C-methyltransferase 2 (SMT2), found in Arabidopsis thaliana (Mouse-ear cress).